The following is a 187-amino-acid chain: Elongation factor P (187 aa).

The protein belongs to the elongation factor P family.

The protein resides in the cytoplasm. It functions in the pathway protein biosynthesis; polypeptide chain elongation. In terms of biological role, involved in peptide bond synthesis. Stimulates efficient translation and peptide-bond synthesis on native or reconstituted 70S ribosomes in vitro. Probably functions indirectly by altering the affinity of the ribosome for aminoacyl-tRNA, thus increasing their reactivity as acceptors for peptidyl transferase. The sequence is that of Elongation factor P from Roseobacter denitrificans (strain ATCC 33942 / OCh 114) (Erythrobacter sp. (strain OCh 114)).